The primary structure comprises 528 residues: Probable serine/threonine-protein kinase 380R (528 aa).

A disordered region spans residues 70-96 (VKIPKSKSPPKVKSPKRKKSPVRRRVS). The span at 73 to 95 (PKSKSPPKVKSPKRKKSPVRRRV) shows a compositional bias: basic residues. Positions 156–507 (FTNVKAVGKG…LANVLIHKIF (352 aa)) constitute a Protein kinase domain. Residues 162-170 (VGKGSFGTV) and Lys187 each bind ATP. Asp302 serves as the catalytic Proton acceptor.

Belongs to the protein kinase superfamily. Ser/Thr protein kinase family.

It carries out the reaction L-seryl-[protein] + ATP = O-phospho-L-seryl-[protein] + ADP + H(+). The catalysed reaction is L-threonyl-[protein] + ATP = O-phospho-L-threonyl-[protein] + ADP + H(+). The protein is Probable serine/threonine-protein kinase 380R of Invertebrate iridescent virus 6 (IIV-6).